Reading from the N-terminus, the 2334-residue chain is Genome polyprotein (2334 aa).

One can recognise an SF3 helicase domain in the interval 487–647; it reads QKVVADIHTL…EGWQSTRHGS (161 aa). An O-(5'-phospho-RNA)-tyrosine modification is found at Tyr1007. One can recognise a Peptidase C24 domain in the interval 1102–1237; it reads GLPGYLRFNG…SKMCTLIDCT (136 aa). Catalysis depends on for 3CLpro activity residues His1128, Asp1145, and Cys1205. The RdRp catalytic domain maps to 1488-1612; sequence GDFLCLDYSK…AMTPMMVSLL (125 aa). The cysteines at positions 1577 and 1584 are disulfide-linked. The interval 1760 to 1784 is disordered; that stretch reads EGKPRADAPGTATTASVPGTTTDGM. Residues 1767-1781 show a composition bias toward low complexity; that stretch reads APGTATTASVPGTTT.

Mn(2+) serves as cofactor. In terms of processing, specific enzymatic cleavages by its own cysteine protease yield mature proteins. The protease cleaves itself from the nascent polyprotein autocatalytically. Precursor p41 can be cleaved by viral 3CLpro into protein p19 and VPg, or cleaved by host protease into protein p23/2 and protein p18. VPg is uridylylated by the polymerase and is covalently attached to the 5'-end of the polyadenylated genomic and subgenomic RNAs. This uridylylated form acts as a nucleotide-peptide primer for the polymerase.

Its subcellular location is the virion. The protein resides in the host cytoplasm. The catalysed reaction is a ribonucleoside 5'-triphosphate + H2O = a ribonucleoside 5'-diphosphate + phosphate + H(+). It catalyses the reaction Endopeptidase with a preference for cleavage when the P1 position is occupied by Glu-|-Xaa and the P1' position is occupied by Gly-|-Yaa.. It carries out the reaction RNA(n) + a ribonucleoside 5'-triphosphate = RNA(n+1) + diphosphate. In terms of biological role, together with NTPase and NS4, initiates the formation of the replication complex. Induces the proliferation of the host smooth ER membranes forming long tubular structures. These remodeled membranes probably form the viral factories that contain the replication complex. Its function is as follows. Displays NTPase activity, but no helicase activity. Induces the formation of convoluted membranes derived from the host ER. These remodeled membranes probably form the viral factories that contain the replication complex. Together with NS2 and NS4, initiates the formation of the replication complex. Probable key protein responsible for the formation of membrane alterations by the virus. Induces the formation of convoluted membranes derived from the host ER. These remodeled membranes probably form the viral factories that contain the replication complex. Together with NS2 and NTPase, initiates the formation of the replication complex. Functionally, viral genome-linked protein is covalently linked to the 5'-end of the positive-strand, negative-strand genomic RNAs and subgenomic RNA. Acts as a genome-linked replication primer. May recruit ribosome to viral RNA thereby promoting viral proteins translation. Interacts with host translation initiation complex to allow the translation of viral proteins. In terms of biological role, processes the polyprotein. 3CLpro-RdRp is first released by autocleavage, then all other proteins are cleaved. May cleave polyadenylate-binding protein thereby inhibiting cellular translation. Its function is as follows. Replicates genomic and antigenomic RNA by recognizing replications specific signals. Also transcribes a subgenomic mRNA by initiating RNA synthesis internally on antigenomic RNA. This sgRNA codes for structural proteins. Catalyzes the covalent attachment VPg with viral RNAs. Capsid protein VP60 self assembles to form an icosahedral capsid with a T=3 symmetry, about 35 nm in diameter, and consisting of 180 capsid proteins. A smaller form of capsid with a diameter of 23 nm might be capsid proteins assembled as icosahedron with T=1 symmetry. The capsid encapsulate VP2 proteins and genomic or subgenomic RNA. Attaches virion to target cells by binding histo-blood group antigens, inducing endocytosis of the viral particle. Acidification of the endosome induces conformational change of capsid protein thereby injecting virus genomic RNA into host cytoplasm. This Lepus europaeus (European hare) protein is Genome polyprotein.